The primary structure comprises 184 residues: Major urinary protein 3 (184 aa).

The signal sequence occupies residues 1–22; the sequence is MKLLLPLLLLLCLELTLVCIHA. Asn66 carries N-linked (GlcNAc...) asparagine glycosylation. A disulfide bond links Cys86 and Cys179.

The protein belongs to the calycin superfamily. Lipocalin family. Post-translationally, glycosylated. Abundant in the urine of adult male mice but absent from that of females.

It localises to the secreted. Its function is as follows. Binds pheromones that are released from drying urine of males. These pheromones affect the sexual behavior of females. This is Major urinary protein 3 (Mup3) from Mus musculus (Mouse).